A 312-amino-acid chain; its full sequence is Olfactory receptor 10C1 (312 aa).

The Extracellular portion of the chain corresponds to 1–24 (MSANTSMVTEFLLLGFSHLADLQG). N4 is a glycosylation site (N-linked (GlcNAc...) asparagine). The chain crosses the membrane as a helical span at residues 25-45 (LLFSVFLTIYLLTVAGNFLIV). The Cytoplasmic portion of the chain corresponds to 46 to 53 (VLVSTDAA). Residues 54 to 74 (LQSPMYFFLRTLSALEIGYTS) form a helical membrane-spanning segment. At 75-98 (VTVPLLLHHLLTGRRHISRSGCAL) the chain is on the extracellular side. Residues C96 and C188 are joined by a disulfide bond. A helical transmembrane segment spans residues 99–119 (QMFFFLFFGATECCLLAAMAY). The Cytoplasmic segment spans residues 120–138 (DRYAAICEPLRYPLLLSHR). The helical transmembrane segment at 139–159 (VCLQLAGSAWACGVLVGLGHT) threads the bilayer. Over 160–196 (PFIFSLPFCGPNTIPQFFCEIQPVLQLVCGDTSLNEL) the chain is Extracellular. A helical transmembrane segment spans residues 197 to 216 (QIILATALLILCPFGLILGS). At 217-236 (YGRILVTIFRIPSVAGRRKA) the chain is on the cytoplasmic side. The helical transmembrane segment at 237-257 (FSTCSSHLIMVSLFYGTALFI) threads the bilayer. Residues 258–270 (YIRPKASYDPATD) are Extracellular-facing. Residues 271 to 291 (PLVSLFYAVVTPILNPIIYSL) form a helical membrane-spanning segment. The Cytoplasmic segment spans residues 292-312 (RNTEVKAALKRTIQKTVPMEI).

It belongs to the G-protein coupled receptor 1 family.

The protein localises to the cell membrane. Its function is as follows. Odorant receptor. The sequence is that of Olfactory receptor 10C1 (OR10C1) from Homo sapiens (Human).